Reading from the N-terminus, the 482-residue chain is Bifunctional protein HldE (482 aa).

Residues 1 to 322 (MFGLESKSPK…QYIHTQPSNL (322 aa)) form a ribokinase region. Residue 198–201 (NKKE) participates in ATP binding. The active site involves D267. Positions 350–482 (FTNGCFDILH…IQRSKICKHS (133 aa)) are cytidylyltransferase.

The protein in the N-terminal section; belongs to the carbohydrate kinase PfkB family. In the C-terminal section; belongs to the cytidylyltransferase family. Homodimer.

The enzyme catalyses D-glycero-beta-D-manno-heptose 7-phosphate + ATP = D-glycero-beta-D-manno-heptose 1,7-bisphosphate + ADP + H(+). The catalysed reaction is D-glycero-beta-D-manno-heptose 1-phosphate + ATP + H(+) = ADP-D-glycero-beta-D-manno-heptose + diphosphate. The protein operates within nucleotide-sugar biosynthesis; ADP-L-glycero-beta-D-manno-heptose biosynthesis; ADP-L-glycero-beta-D-manno-heptose from D-glycero-beta-D-manno-heptose 7-phosphate: step 1/4. It participates in nucleotide-sugar biosynthesis; ADP-L-glycero-beta-D-manno-heptose biosynthesis; ADP-L-glycero-beta-D-manno-heptose from D-glycero-beta-D-manno-heptose 7-phosphate: step 3/4. Its pathway is bacterial outer membrane biogenesis; LPS core biosynthesis. Catalyzes the phosphorylation of D-glycero-D-manno-heptose 7-phosphate at the C-1 position to selectively form D-glycero-beta-D-manno-heptose-1,7-bisphosphate. Functionally, catalyzes the ADP transfer from ATP to D-glycero-beta-D-manno-heptose 1-phosphate, yielding ADP-D-glycero-beta-D-manno-heptose. This Helicobacter hepaticus (strain ATCC 51449 / 3B1) protein is Bifunctional protein HldE.